We begin with the raw amino-acid sequence, 440 residues long: Adenylosuccinate synthetase 1, chloroplastic (440 aa).

Residues G13 to K19 and G41 to T43 contribute to the GTP site. The active-site Proton acceptor is D14. The Mg(2+) site is built by D14 and G41. IMP contacts are provided by residues D14–K17, N39–H42, T135, R149, Q230, T245, and R313. H42 serves as the catalytic Proton donor. T309–R315 lines the substrate pocket. GTP contacts are provided by residues R315 and K341–D343.

It belongs to the adenylosuccinate synthetase family. In terms of assembly, homodimer. Requires Mg(2+) as cofactor.

The protein resides in the plastid. It localises to the chloroplast. It carries out the reaction IMP + L-aspartate + GTP = N(6)-(1,2-dicarboxyethyl)-AMP + GDP + phosphate + 2 H(+). The protein operates within purine metabolism; AMP biosynthesis via de novo pathway; AMP from IMP: step 1/2. Plays an important role in the de novo pathway and in the salvage pathway of purine nucleotide biosynthesis. Catalyzes the first committed step in the biosynthesis of AMP from IMP. The polypeptide is Adenylosuccinate synthetase 1, chloroplastic (Ricinus communis (Castor bean)).